We begin with the raw amino-acid sequence, 1097 residues long: DNA-directed RNA polymerase subunit beta (1097 aa).

Residues 1073-1097 are disordered; sequence DVNPRRSTPSRPTYESLGVADYDED.

The protein belongs to the RNA polymerase beta chain family. In cyanobacteria the RNAP catalytic core is composed of 2 alpha, 1 beta, 1 beta', 1 gamma and 1 omega subunit. When a sigma factor is associated with the core the holoenzyme is formed, which can initiate transcription.

It catalyses the reaction RNA(n) + a ribonucleoside 5'-triphosphate = RNA(n+1) + diphosphate. DNA-dependent RNA polymerase catalyzes the transcription of DNA into RNA using the four ribonucleoside triphosphates as substrates. In Synechococcus sp. (strain CC9311), this protein is DNA-directed RNA polymerase subunit beta.